A 243-amino-acid polypeptide reads, in one-letter code: GTP cyclohydrolase 1 type 2 (243 aa).

5 residues coordinate a divalent metal cation: histidine 63, histidine 64, aspartate 102, histidine 209, and glutamate 213.

The protein belongs to the GTP cyclohydrolase I type 2/NIF3 family. As to quaternary structure, homohexamer.

It catalyses the reaction GTP + H2O = 7,8-dihydroneopterin 3'-triphosphate + formate + H(+). The protein operates within cofactor biosynthesis; 7,8-dihydroneopterin triphosphate biosynthesis; 7,8-dihydroneopterin triphosphate from GTP: step 1/1. In terms of biological role, converts GTP to dihydroneopterin triphosphate. Is not active with GDP, GMP, ATP, CTP or UTP as substrate. The chain is GTP cyclohydrolase 1 type 2 from Helicobacter pylori (strain ATCC 700392 / 26695) (Campylobacter pylori).